The chain runs to 317 residues: Acetyl-coenzyme A carboxylase carboxyl transferase subunit beta (317 aa).

Positions 1 to 28 (MANNMTDTMTKPDINNDSTSLQQNGNKA) are disordered. One can recognise a CoA carboxyltransferase N-terminal domain in the interval 55-317 (PSTKCSSCHS…LCSVPNVDVQ (263 aa)). Zn(2+) contacts are provided by cysteine 59, cysteine 62, cysteine 78, and cysteine 81. Residues 59 to 81 (CSSCHSIITNTALIFNCYVCPHC) form a C4-type zinc finger.

The protein belongs to the AccD/PCCB family. Acetyl-CoA carboxylase is a heterohexamer composed of biotin carboxyl carrier protein (AccB), biotin carboxylase (AccC) and two subunits each of ACCase subunit alpha (AccA) and ACCase subunit beta (AccD). Zn(2+) serves as cofactor.

It is found in the cytoplasm. It carries out the reaction N(6)-carboxybiotinyl-L-lysyl-[protein] + acetyl-CoA = N(6)-biotinyl-L-lysyl-[protein] + malonyl-CoA. It participates in lipid metabolism; malonyl-CoA biosynthesis; malonyl-CoA from acetyl-CoA: step 1/1. Its function is as follows. Component of the acetyl coenzyme A carboxylase (ACC) complex. Biotin carboxylase (BC) catalyzes the carboxylation of biotin on its carrier protein (BCCP) and then the CO(2) group is transferred by the transcarboxylase to acetyl-CoA to form malonyl-CoA. The polypeptide is Acetyl-coenzyme A carboxylase carboxyl transferase subunit beta (Psychrobacter cryohalolentis (strain ATCC BAA-1226 / DSM 17306 / VKM B-2378 / K5)).